We begin with the raw amino-acid sequence, 154 residues long: Myoglobin (154 aa).

Positions 2–148 (GLSDAEWQLV…FRNDIAAKYK (147 aa)) constitute a Globin domain. Ser-4 carries the post-translational modification Phosphoserine. His-65 contacts nitrite. Residue His-65 coordinates O2. Position 68 is a phosphothreonine (Thr-68). His-94 lines the heme b pocket.

This sequence belongs to the globin family. As to quaternary structure, monomeric.

The protein localises to the cytoplasm. Its subcellular location is the sarcoplasm. It catalyses the reaction Fe(III)-heme b-[protein] + nitric oxide + H2O = Fe(II)-heme b-[protein] + nitrite + 2 H(+). The catalysed reaction is H2O2 + AH2 = A + 2 H2O. In terms of biological role, monomeric heme protein which primary function is to store oxygen and facilitate its diffusion within muscle tissues. Reversibly binds oxygen through a pentacoordinated heme iron and enables its timely and efficient release as needed during periods of heightened demand. Depending on the oxidative conditions of tissues and cells, and in addition to its ability to bind oxygen, it also has a nitrite reductase activity whereby it regulates the production of bioactive nitric oxide. Under stress conditions, like hypoxia and anoxia, it also protects cells against reactive oxygen species thanks to its pseudoperoxidase activity. The sequence is that of Myoglobin (MB) from Orycteropus afer (Aardvark).